A 263-amino-acid chain; its full sequence is Tryptophan synthase alpha chain (263 aa).

Active-site proton acceptor residues include E49 and D60.

It belongs to the TrpA family. Tetramer of two alpha and two beta chains.

It catalyses the reaction (1S,2R)-1-C-(indol-3-yl)glycerol 3-phosphate + L-serine = D-glyceraldehyde 3-phosphate + L-tryptophan + H2O. It functions in the pathway amino-acid biosynthesis; L-tryptophan biosynthesis; L-tryptophan from chorismate: step 5/5. The alpha subunit is responsible for the aldol cleavage of indoleglycerol phosphate to indole and glyceraldehyde 3-phosphate. In Cereibacter sphaeroides (strain ATCC 17029 / ATH 2.4.9) (Rhodobacter sphaeroides), this protein is Tryptophan synthase alpha chain.